Here is a 398-residue protein sequence, read N- to C-terminus: 4-hydroxy-3-methylbut-2-en-1-yl diphosphate synthase (ferredoxin) (398 aa).

The [4Fe-4S] cluster site is built by Cys-306, Cys-309, Cys-340, and Glu-347.

This sequence belongs to the IspG family. [4Fe-4S] cluster is required as a cofactor.

It catalyses the reaction (2E)-4-hydroxy-3-methylbut-2-enyl diphosphate + 2 oxidized [2Fe-2S]-[ferredoxin] + H2O = 2-C-methyl-D-erythritol 2,4-cyclic diphosphate + 2 reduced [2Fe-2S]-[ferredoxin] + H(+). It participates in isoprenoid biosynthesis; isopentenyl diphosphate biosynthesis via DXP pathway; isopentenyl diphosphate from 1-deoxy-D-xylulose 5-phosphate: step 5/6. In terms of biological role, converts 2C-methyl-D-erythritol 2,4-cyclodiphosphate (ME-2,4cPP) into 1-hydroxy-2-methyl-2-(E)-butenyl 4-diphosphate. The chain is 4-hydroxy-3-methylbut-2-en-1-yl diphosphate synthase (ferredoxin) from Synechococcus sp. (strain CC9605).